The sequence spans 1251 residues: Immunoglobulin-like and fibronectin type III domain-containing protein 1 (1251 aa).

Positions Pro-29–Thr-119 constitute an Ig-like 1 domain. Positions Arg-61–Pro-81 are disordered. Residues Ile-188–His-221 adopt a coiled-coil conformation. In terms of domain architecture, Ig-like 2 spans Pro-309–Gly-398. A compositionally biased stretch (basic and acidic residues) spans Leu-403 to Thr-433. Residues Leu-403–Pro-454 are disordered. Polar residues predominate over residues Arg-434–Lys-449. Residues Pro-454–Thr-539 form the Ig-like 3 domain. Fibronectin type-III domains lie at Pro-646–Glu-741, Ala-746–Pro-845, and Leu-847–Val-942. In terms of domain architecture, Ig-like 4 spans Pro-946 to Ala-1030. The Fibronectin type-III 4 domain occupies Ala-1043 to Gln-1137. Positions Pro-1151–Ile-1245 constitute an Ig-like 5 domain.

Interacts with FLNC. Interacts with KY. In terms of tissue distribution, expressed in skeletal muscle.

It localises to the nucleus. The protein resides in the cytoplasm. It is found in the myofibril. Its subcellular location is the sarcomere. The protein localises to the z line. This Homo sapiens (Human) protein is Immunoglobulin-like and fibronectin type III domain-containing protein 1 (IGFN1).